We begin with the raw amino-acid sequence, 61 residues long: Protein YncO (61 aa).

Residues 18-38 traverse the membrane as a helical segment; the sequence is HVFLYVFYIFLFLVLFIMTIY.

It is found in the cell inner membrane. This Escherichia coli (strain K12) protein is Protein YncO.